Consider the following 703-residue polypeptide: Probable ATP-dependent RNA helicase vasa-like (703 aa).

Disordered stretches follow at residues 1 to 22, 35 to 73, and 88 to 167; these read MSDD…ESFG, NTGN…GRGG, and RDCP…RGCF. The span at 61 to 73 shows a compositional bias: gly residues; it reads SGGGGFGGRGRGG. The segment at 77–92 adopts a CCHC-type 1 zinc-finger fold; that stretch reads CFKCGDEGHMARDCPS. Over residues 146–155 the composition is skewed to gly residues; it reads FGFGSGSGSR. 2 consecutive CCHC-type zinc fingers follow at residues 166-181 and 189-204; these read CFKC…DCPS and CFKC…DCPN. Residues 261-289 carry the Q motif motif; sequence ESFQSMNLRPLLLENIVKAGYGCPTPVQK. The Helicase ATP-binding domain occupies 292–475; the sequence is IPNVMNGRDI…SAFLNNYLFV (184 aa). An ATP-binding site is contributed by 305 to 312; it reads AQTGSGKT. The DEAD box motif lies at 419–422; it reads DEAD. Residues 506–651 form the Helicase C-terminal domain; sequence MCEEILISAD…TIPDWLTQKA (146 aa). A disordered region spans residues 676–703; it reads GGGRGWEKNQASSFLGGPSESNVDEEWD.

It belongs to the DEAD box helicase family. DDX4/VASA subfamily. As to expression, expressed in ovaries and testis. Not expressed in somatic tissue of the ovaries including follicle cells, muscle and connective tissue.

It localises to the cytoplasm. The protein localises to the nucleus. Its subcellular location is the nucleolus. It carries out the reaction ATP + H2O = ADP + phosphate + H(+). Its function is as follows. Involved in translational control mechanisms operating in early stages of oogenesis. Required maternally in many stages of oogenesis, including cystocyte differentiation, oocyte differentiation, and specification of anterior-posterior polarity in the developing cysts. Essential for the formation and/or structural integrity of perinuclear nuage particles during germ cell formation. The chain is Probable ATP-dependent RNA helicase vasa-like from Penaeus vannamei (Whiteleg shrimp).